The following is a 102-amino-acid chain: Protein RnfH (102 aa).

This sequence belongs to the UPF0125 (RnfH) family.

The chain is Protein RnfH from Pseudomonas entomophila (strain L48).